The sequence spans 198 residues: FMN-dependent NADH:quinone oxidoreductase (198 aa).

FMN-binding positions include Ser-9 and 95–98 (MYNF).

The protein belongs to the azoreductase type 1 family. Homodimer. The cofactor is FMN.

The enzyme catalyses 2 a quinone + NADH + H(+) = 2 a 1,4-benzosemiquinone + NAD(+). It carries out the reaction N,N-dimethyl-1,4-phenylenediamine + anthranilate + 2 NAD(+) = 2-(4-dimethylaminophenyl)diazenylbenzoate + 2 NADH + 2 H(+). Functionally, quinone reductase that provides resistance to thiol-specific stress caused by electrophilic quinones. In terms of biological role, also exhibits azoreductase activity. Catalyzes the reductive cleavage of the azo bond in aromatic azo compounds to the corresponding amines. The sequence is that of FMN-dependent NADH:quinone oxidoreductase from Alcanivorax borkumensis (strain ATCC 700651 / DSM 11573 / NCIMB 13689 / SK2).